Consider the following 1154-residue polypeptide: Diacylglycerol kinase eta (1154 aa).

The disordered stretch occupies residues 1-54; that stretch reads MAGAGYQHHPPGGAAVGTSAVSPTAAGPGEDSSDSEAEQGGPQKLIRKVSTSGQ. In terms of domain architecture, PH spans 59-152; that stretch reads TSIKEGQLLK…WISSLKSVQS (94 aa). 2 Phorbol-ester/DAG-type zinc fingers span residues 169–219 and 241–292; these read MHNW…TNNC and PHQW…HPVC. One can recognise a DAGKc domain in the interval 322–457; the sequence is FCVSPLLVFV…LDRWSIMTYE (136 aa). Disordered regions lie at residues 560–608, 634–678, and 1123–1154; these read QASR…AVKP, DEQT…APEA, and FKME…SPGN. Positions 573 to 586 are enriched in acidic residues; that stretch reads PEEDAVESSSEESL. Over residues 656–667 the composition is skewed to basic and acidic residues; sequence DDSKDNDTKESP. Over residues 1131 to 1154 the composition is skewed to polar residues; that stretch reads QKTSSQPGPGDTESGSYEANSPGN.

This sequence belongs to the eukaryotic diacylglycerol kinase family. In terms of assembly, interacts with RAF1 and BRAF. Post-translationally, phosphorylated. Phosphorylation does not inhibit catalytic activity. In terms of tissue distribution, expressed in a wide variety of tissues. Most abundant in the brain and testis; also found in lung, spleen, and prostate (at protein level).

The protein localises to the cytoplasm. It is found in the cell membrane. It carries out the reaction a 1,2-diacyl-sn-glycerol + ATP = a 1,2-diacyl-sn-glycero-3-phosphate + ADP + H(+). The catalysed reaction is 1,2-di-(9Z-octadecenoyl)-sn-glycerol + ATP = 1,2-di-(9Z-octadecenoyl)-sn-glycero-3-phosphate + ADP + H(+). It functions in the pathway lipid metabolism; glycerolipid metabolism. Its function is as follows. Diacylglycerol kinase that converts diacylglycerol/DAG into phosphatidic acid/phosphatidate/PA and regulates the respective levels of these two bioactive lipids. Thereby, acts as a central switch between the signaling pathways activated by these second messengers with different cellular targets and opposite effects in numerous biological processes. Plays a key role in promoting cell growth. Activates the Ras/B-Raf/C-Raf/MEK/ERK signaling pathway induced by EGF. Regulates the recruitment of RAF1 and BRAF from cytoplasm to membranes and their heterodimerization. The sequence is that of Diacylglycerol kinase eta (DGKH) from Mesocricetus auratus (Golden hamster).